The sequence spans 397 residues: Argininosuccinate synthase (397 aa).

8 to 16 (AYSGGLDTS) serves as a coordination point for ATP. Positions 86 and 91 each coordinate L-citrulline. G116 contacts ATP. Residues T118, N122, and D123 each coordinate L-aspartate. N122 provides a ligand contact to L-citrulline. The L-citrulline site is built by R126, S175, S184, E260, and Y272.

Belongs to the argininosuccinate synthase family. Type 1 subfamily. As to quaternary structure, homotetramer.

It is found in the cytoplasm. It catalyses the reaction L-citrulline + L-aspartate + ATP = 2-(N(omega)-L-arginino)succinate + AMP + diphosphate + H(+). It participates in amino-acid biosynthesis; L-arginine biosynthesis; L-arginine from L-ornithine and carbamoyl phosphate: step 2/3. This is Argininosuccinate synthase from Clostridium botulinum (strain Kyoto / Type A2).